Consider the following 361-residue polypeptide: Peptide chain release factor 1 (361 aa).

At Gln237 the chain carries N5-methylglutamine. Basic and acidic residues predominate over residues 287–297 (KQQKEQSDTRK). The disordered stretch occupies residues 287–313 (KQQKEQSDTRKSLVGSGDRSERIRTYN).

Belongs to the prokaryotic/mitochondrial release factor family. Post-translationally, methylated by PrmC. Methylation increases the termination efficiency of RF1.

Its subcellular location is the cytoplasm. Functionally, peptide chain release factor 1 directs the termination of translation in response to the peptide chain termination codons UAG and UAA. This chain is Peptide chain release factor 1, found in Francisella tularensis subsp. holarctica (strain FTNF002-00 / FTA).